Reading from the N-terminus, the 344-residue chain is GTPase Obg (344 aa).

One can recognise an Obg domain in the interval 1–159 (MKFLDEAKVY…MWLILRLKLI (159 aa)). The OBG-type G domain maps to 160 to 327 (ADAGLVGLPN…ALRAIQAQLD (168 aa)). Residues 166–173 (GLPNAGKS), 191–195 (FTTLH), 212–215 (DIPG), 279–282 (SKAD), and 308–310 (SAA) each bind GTP. S173 and T193 together coordinate Mg(2+).

It belongs to the TRAFAC class OBG-HflX-like GTPase superfamily. OBG GTPase family. As to quaternary structure, monomer. Mg(2+) serves as cofactor.

Its subcellular location is the cytoplasm. Its function is as follows. An essential GTPase which binds GTP, GDP and possibly (p)ppGpp with moderate affinity, with high nucleotide exchange rates and a fairly low GTP hydrolysis rate. Plays a role in control of the cell cycle, stress response, ribosome biogenesis and in those bacteria that undergo differentiation, in morphogenesis control. The protein is GTPase Obg of Methylorubrum extorquens (strain CM4 / NCIMB 13688) (Methylobacterium extorquens).